A 266-amino-acid chain; its full sequence is Sec-independent protein translocase protein TatC (266 aa).

A run of 6 helical transmembrane segments spans residues Met-28 to Phe-48, Phe-93 to Phe-113, Gly-134 to Leu-154, Leu-183 to Phe-203, His-221 to Thr-241, and Ile-242 to Val-262.

The protein belongs to the TatC family. As to quaternary structure, forms a complex with TatA.

The protein localises to the cell inner membrane. Its function is as follows. Part of the twin-arginine translocation (Tat) system that transports large folded proteins containing a characteristic twin-arginine motif in their signal peptide across membranes. The protein is Sec-independent protein translocase protein TatC of Blattabacterium sp. subsp. Periplaneta americana (strain BPLAN) (Periplaneta americana symbiotic bacterium).